The chain runs to 510 residues: 2,3-bisphosphoglycerate-independent phosphoglycerate mutase (510 aa).

The Mn(2+) site is built by D16 and S66. S66 serves as the catalytic Phosphoserine intermediate. Substrate-binding positions include H127, 156–157 (RD), R186, R192, 257–260 (RADR), and K333. The Mn(2+) site is built by D400, H404, D441, H442, and H460.

The protein belongs to the BPG-independent phosphoglycerate mutase family. As to quaternary structure, monomer. Mn(2+) is required as a cofactor.

The catalysed reaction is (2R)-2-phosphoglycerate = (2R)-3-phosphoglycerate. It participates in carbohydrate degradation; glycolysis; pyruvate from D-glyceraldehyde 3-phosphate: step 3/5. In terms of biological role, catalyzes the interconversion of 2-phosphoglycerate and 3-phosphoglycerate. In Gluconobacter oxydans (strain 621H) (Gluconobacter suboxydans), this protein is 2,3-bisphosphoglycerate-independent phosphoglycerate mutase.